Consider the following 225-residue polypeptide: NAD(P)H-quinone oxidoreductase subunit K, chloroplastic (225 aa).

4 residues coordinate [4Fe-4S] cluster: Cys43, Cys44, Cys108, and Cys139.

Belongs to the complex I 20 kDa subunit family. As to quaternary structure, NDH is composed of at least 16 different subunits, 5 of which are encoded in the nucleus. [4Fe-4S] cluster serves as cofactor.

The protein localises to the plastid. It localises to the chloroplast thylakoid membrane. It catalyses the reaction a plastoquinone + NADH + (n+1) H(+)(in) = a plastoquinol + NAD(+) + n H(+)(out). The catalysed reaction is a plastoquinone + NADPH + (n+1) H(+)(in) = a plastoquinol + NADP(+) + n H(+)(out). NDH shuttles electrons from NAD(P)H:plastoquinone, via FMN and iron-sulfur (Fe-S) centers, to quinones in the photosynthetic chain and possibly in a chloroplast respiratory chain. The immediate electron acceptor for the enzyme in this species is believed to be plastoquinone. Couples the redox reaction to proton translocation, and thus conserves the redox energy in a proton gradient. The protein is NAD(P)H-quinone oxidoreductase subunit K, chloroplastic of Hordeum vulgare (Barley).